The chain runs to 876 residues: Paramyosin (876 aa).

The nonhelical region stretch occupies residues 1–28; that stretch reads MSARSAKFMYRSGNAGASGDLSVEYGTD. Positions 29 to 855 form a coiled coil; the sequence is LGALTRLEDK…IRAKHRSWVT (827 aa). The tract at residues 856–876 is nonhelical region; it reads TSQVPGGTRQVFVTQEEQSNY.

It belongs to the paramyosin family. Homodimer.

It localises to the cytoplasm. Its subcellular location is the myofibril. Functionally, paramyosin is a major structural component of many thick filaments isolated from invertebrate muscles. This is Paramyosin from Sarcoptes scabiei (Itch mite).